The chain runs to 302 residues: Glycine--tRNA ligase alpha subunit (302 aa).

It belongs to the class-II aminoacyl-tRNA synthetase family. Tetramer of two alpha and two beta subunits.

Its subcellular location is the cytoplasm. The enzyme catalyses tRNA(Gly) + glycine + ATP = glycyl-tRNA(Gly) + AMP + diphosphate. This is Glycine--tRNA ligase alpha subunit from Psychromonas ingrahamii (strain DSM 17664 / CCUG 51855 / 37).